Here is an 89-residue protein sequence, read N- to C-terminus: Small ribosomal subunit protein uS15 (89 aa).

This sequence belongs to the universal ribosomal protein uS15 family. As to quaternary structure, part of the 30S ribosomal subunit. Forms a bridge to the 50S subunit in the 70S ribosome, contacting the 23S rRNA.

Functionally, one of the primary rRNA binding proteins, it binds directly to 16S rRNA where it helps nucleate assembly of the platform of the 30S subunit by binding and bridging several RNA helices of the 16S rRNA. Its function is as follows. Forms an intersubunit bridge (bridge B4) with the 23S rRNA of the 50S subunit in the ribosome. In Buchnera aphidicola subsp. Schizaphis graminum (strain Sg), this protein is Small ribosomal subunit protein uS15.